The following is a 243-amino-acid chain: UPF0246 protein SUB1767 (243 aa).

This sequence belongs to the UPF0246 family.

The chain is UPF0246 protein SUB1767 from Streptococcus uberis (strain ATCC BAA-854 / 0140J).